Here is a 487-residue protein sequence, read N- to C-terminus: Cysteine--tRNA ligase (487 aa).

A Zn(2+)-binding site is contributed by C27. The 'HIGH' region motif lies at 29–39; the sequence is ATVQGLPHVGH. The segment at 174 to 194 is disordered; sequence IDDMQGAPDADPRGKKDPRDF. Residues 183–194 are compositionally biased toward basic and acidic residues; it reads ADPRGKKDPRDF. 3 residues coordinate Zn(2+): C225, H250, and E254. The 'KMSKS' region motif lies at 281–285; sequence KMSKS. Position 284 (K284) interacts with ATP.

The protein belongs to the class-I aminoacyl-tRNA synthetase family. Monomer. Zn(2+) serves as cofactor.

It localises to the cytoplasm. The catalysed reaction is tRNA(Cys) + L-cysteine + ATP = L-cysteinyl-tRNA(Cys) + AMP + diphosphate. This is Cysteine--tRNA ligase from Arthrobacter sp. (strain FB24).